The primary structure comprises 788 residues: Bifunctional purine biosynthetic protein ADE1 (788 aa).

The GARS stretch occupies residues 1–429 (MSLRILLVGN…NRKDIAYKAF (429 aa)). The region spanning 114 to 323 (KDFMKKHNIP…LAEVMLACVE (210 aa)) is the ATP-grasp domain. An ATP-binding site is contributed by 140-201 (VKKVGHRVVI…EEFLEGDELS (62 aa)). Positions 291 and 293 each coordinate Mg(2+). An AIRS region spans residues 439-752 (ITYAQAGVSI…VVKQEKVAEV (314 aa)).

This sequence in the N-terminal section; belongs to the GARS family. In the C-terminal section; belongs to the AIR synthase family. It depends on Mg(2+) as a cofactor. The cofactor is Mn(2+).

It localises to the cytoplasm. Its subcellular location is the cytosol. It catalyses the reaction 5-phospho-beta-D-ribosylamine + glycine + ATP = N(1)-(5-phospho-beta-D-ribosyl)glycinamide + ADP + phosphate + H(+). The enzyme catalyses 2-formamido-N(1)-(5-O-phospho-beta-D-ribosyl)acetamidine + ATP = 5-amino-1-(5-phospho-beta-D-ribosyl)imidazole + ADP + phosphate + H(+). Its pathway is purine metabolism; IMP biosynthesis via de novo pathway; 5-amino-1-(5-phospho-D-ribosyl)imidazole from N(2)-formyl-N(1)-(5-phospho-D-ribosyl)glycinamide: step 2/2. The protein operates within purine metabolism; IMP biosynthesis via de novo pathway; N(1)-(5-phospho-D-ribosyl)glycinamide from 5-phospho-alpha-D-ribose 1-diphosphate: step 2/2. Catalyzes the second and fifth step in the 'de novo' purine biosynthesis pathway; contains phosphoribosylamine--glycine ligase (GARS) and phosphoribosylformylglycinamidine cyclo-ligase (AIRS) activities. This chain is Bifunctional purine biosynthetic protein ADE1, found in Yarrowia lipolytica (strain CLIB 122 / E 150) (Yeast).